A 526-amino-acid chain; its full sequence is Bifunctional purine biosynthesis protein PurH (526 aa).

One can recognise an MGS-like domain in the interval 1 to 147 (MSSIKRALIS…KNWKHVAIVT (147 aa)).

The protein belongs to the PurH family.

It carries out the reaction (6R)-10-formyltetrahydrofolate + 5-amino-1-(5-phospho-beta-D-ribosyl)imidazole-4-carboxamide = 5-formamido-1-(5-phospho-D-ribosyl)imidazole-4-carboxamide + (6S)-5,6,7,8-tetrahydrofolate. The enzyme catalyses IMP + H2O = 5-formamido-1-(5-phospho-D-ribosyl)imidazole-4-carboxamide. It functions in the pathway purine metabolism; IMP biosynthesis via de novo pathway; 5-formamido-1-(5-phospho-D-ribosyl)imidazole-4-carboxamide from 5-amino-1-(5-phospho-D-ribosyl)imidazole-4-carboxamide (10-formyl THF route): step 1/1. The protein operates within purine metabolism; IMP biosynthesis via de novo pathway; IMP from 5-formamido-1-(5-phospho-D-ribosyl)imidazole-4-carboxamide: step 1/1. The chain is Bifunctional purine biosynthesis protein PurH from Neisseria meningitidis serogroup B (strain ATCC BAA-335 / MC58).